We begin with the raw amino-acid sequence, 334 residues long: N-acetyl-gamma-glutamyl-phosphate reductase (334 aa).

Cysteine 154 is a catalytic residue.

It belongs to the NAGSA dehydrogenase family. Type 1 subfamily.

The protein resides in the cytoplasm. The enzyme catalyses N-acetyl-L-glutamate 5-semialdehyde + phosphate + NADP(+) = N-acetyl-L-glutamyl 5-phosphate + NADPH + H(+). It functions in the pathway amino-acid biosynthesis; L-arginine biosynthesis; N(2)-acetyl-L-ornithine from L-glutamate: step 3/4. Functionally, catalyzes the NADPH-dependent reduction of N-acetyl-5-glutamyl phosphate to yield N-acetyl-L-glutamate 5-semialdehyde. This is N-acetyl-gamma-glutamyl-phosphate reductase from Vibrio vulnificus (strain YJ016).